The chain runs to 132 residues: Fatty acid-binding protein 9 (132 aa).

S13, S14, S44, and S91 each carry phosphoserine.

Belongs to the calycin superfamily. Fatty-acid binding protein (FABP) family.

It is found in the cytoplasm. The protein is Fatty acid-binding protein 9 (FABP9) of Homo sapiens (Human).